The sequence spans 317 residues: Acetyl-coenzyme A carboxylase carboxyl transferase subunit alpha (317 aa).

The 254-residue stretch at 40-293 (LEGRVRDAMM…GTVIADALKE (254 aa)) folds into the CoA carboxyltransferase C-terminal domain.

The protein belongs to the AccA family. As to quaternary structure, acetyl-CoA carboxylase is a heterohexamer composed of biotin carboxyl carrier protein (AccB), biotin carboxylase (AccC) and two subunits each of ACCase subunit alpha (AccA) and ACCase subunit beta (AccD).

The protein resides in the cytoplasm. It catalyses the reaction N(6)-carboxybiotinyl-L-lysyl-[protein] + acetyl-CoA = N(6)-biotinyl-L-lysyl-[protein] + malonyl-CoA. It participates in lipid metabolism; malonyl-CoA biosynthesis; malonyl-CoA from acetyl-CoA: step 1/1. Its function is as follows. Component of the acetyl coenzyme A carboxylase (ACC) complex. First, biotin carboxylase catalyzes the carboxylation of biotin on its carrier protein (BCCP) and then the CO(2) group is transferred by the carboxyltransferase to acetyl-CoA to form malonyl-CoA. This is Acetyl-coenzyme A carboxylase carboxyl transferase subunit alpha from Sinorhizobium fredii (strain NBRC 101917 / NGR234).